Consider the following 1201-residue polypeptide: DNA-directed RNA polymerase subunit beta' (1201 aa).

Cysteine 60, cysteine 62, cysteine 75, and cysteine 78 together coordinate Zn(2+). Residues aspartate 449, aspartate 451, and aspartate 453 each coordinate Mg(2+). Residues cysteine 818, cysteine 892, cysteine 899, and cysteine 902 each coordinate Zn(2+).

This sequence belongs to the RNA polymerase beta' chain family. As to quaternary structure, the RNAP catalytic core consists of 2 alpha, 1 beta, 1 beta' and 1 omega subunit. When a sigma factor is associated with the core the holoenzyme is formed, which can initiate transcription. Requires Mg(2+) as cofactor. The cofactor is Zn(2+).

The catalysed reaction is RNA(n) + a ribonucleoside 5'-triphosphate = RNA(n+1) + diphosphate. Functionally, DNA-dependent RNA polymerase catalyzes the transcription of DNA into RNA using the four ribonucleoside triphosphates as substrates. The polypeptide is DNA-directed RNA polymerase subunit beta' (Listeria innocua serovar 6a (strain ATCC BAA-680 / CLIP 11262)).